A 914-amino-acid polypeptide reads, in one-letter code: Caprin-2 (914 aa).

Disordered regions lie at residues 259-283, 298-326, 367-411, 439-480, 495-529, 608-631, and 718-747; these read PLPKSDSQEKTETIKPDSQSRPSGL, EFLNRRYMPETDERRRGETASPRNWKEDF, KTVD…LPKD, DGES…SSQR, CLSNGDRSINGSDLELHSEDKPRKQAEGFNSPPLY, HRSFTSAKTSSVTTASTQTPPELN, and GAGTATQRSSAGWSDSSQVSSPDRDGAYPL. The segment covering 264–273 has biased composition (basic and acidic residues); sequence DSQEKTETIK. The span at 274–283 shows a compositional bias: polar residues; that stretch reads PDSQSRPSGL. Residues 370–392 are compositionally biased toward basic and acidic residues; sequence DIVKRSTTDPKEKRQRKKAEQDS. Over residues 469–480 the composition is skewed to polar residues; sequence KSPSDILPSSQR. Residues 508-520 are compositionally biased toward basic and acidic residues; it reads LELHSEDKPRKQA. A compositionally biased stretch (low complexity) spans 610-626; it reads SFTSAKTSSVTTASTQT. The span at 718–738 shows a compositional bias: polar residues; sequence GAGTATQRSSAGWSDSSQVSS. The region spanning 780 to 914 is the C1q domain; the sequence is LTQLRVAFSA…TFSGFLLYQD (135 aa). Ca(2+) is bound by residues Asp-865 and Glu-871.

The protein belongs to the caprin family. In terms of assembly, homotrimer; via C1q domain.

Its subcellular location is the cytoplasm. The protein localises to the cell membrane. Promotes phosphorylation of the Wnt coreceptor LRP6, leading to increased activity of the canonical Wnt signaling pathway. Facilitates constitutive LRP6 phosphorylation by CDK14/CCNY during G2/M stage of the cell cycle, which may potentiate cells for Wnt signaling. May regulate the transport and translation of mRNAs, modulating for instance the expression of proteins involved in synaptic plasticity in neurons. Involved in regulation of growth as erythroblasts shift from a highly proliferative state towards their terminal phase of differentiation. May be involved in apoptosis. This Danio rerio (Zebrafish) protein is Caprin-2.